A 710-amino-acid polypeptide reads, in one-letter code: Polyribonucleotide nucleotidyltransferase (710 aa).

Residues D487 and D493 each contribute to the Mg(2+) site. Residues 554 to 613 (PKIITMTINPDKIRDVIGPSGKQINKIIEETGVKIDIEQDGTVFISSIDQQMNEKAKKII) enclose the KH domain. Positions 623–691 (GEIYLGKVKR…KQGRVNLSRK (69 aa)) constitute an S1 motif domain.

The protein belongs to the polyribonucleotide nucleotidyltransferase family. Requires Mg(2+) as cofactor.

The protein resides in the cytoplasm. The enzyme catalyses RNA(n+1) + phosphate = RNA(n) + a ribonucleoside 5'-diphosphate. Involved in mRNA degradation. Catalyzes the phosphorolysis of single-stranded polyribonucleotides processively in the 3'- to 5'-direction. This chain is Polyribonucleotide nucleotidyltransferase, found in Bacillus cytotoxicus (strain DSM 22905 / CIP 110041 / 391-98 / NVH 391-98).